The primary structure comprises 318 residues: Replication factor C small subunit (318 aa).

43–50 (GPAGTGKT) is a binding site for ATP.

Belongs to the activator 1 small subunits family. RfcS subfamily. As to quaternary structure, heteromultimer composed of small subunits (RfcS) and large subunits (RfcL).

Its function is as follows. Part of the RFC clamp loader complex which loads the PCNA sliding clamp onto DNA. This is Replication factor C small subunit from Picrophilus torridus (strain ATCC 700027 / DSM 9790 / JCM 10055 / NBRC 100828 / KAW 2/3).